A 458-amino-acid chain; its full sequence is tRNA modification GTPase MnmE (458 aa).

(6S)-5-formyl-5,6,7,8-tetrahydrofolate contacts are provided by R26, E88, and R127. The 155-residue stretch at G224–F378 folds into the TrmE-type G domain. A K(+)-binding site is contributed by N234. Residues N234 to S239, T253 to T259, and D278 to G281 contribute to the GTP site. Residue S238 coordinates Mg(2+). K(+) is bound by residues T253, I255, and T258. T259 contacts Mg(2+). A (6S)-5-formyl-5,6,7,8-tetrahydrofolate-binding site is contributed by K458.

It belongs to the TRAFAC class TrmE-Era-EngA-EngB-Septin-like GTPase superfamily. TrmE GTPase family. Homodimer. Heterotetramer of two MnmE and two MnmG subunits. It depends on K(+) as a cofactor.

The protein resides in the cytoplasm. In terms of biological role, exhibits a very high intrinsic GTPase hydrolysis rate. Involved in the addition of a carboxymethylaminomethyl (cmnm) group at the wobble position (U34) of certain tRNAs, forming tRNA-cmnm(5)s(2)U34. This Streptococcus pyogenes serotype M1 protein is tRNA modification GTPase MnmE.